A 95-amino-acid polypeptide reads, in one-letter code: UPF0235 protein MS0322 (95 aa).

Belongs to the UPF0235 family.

The sequence is that of UPF0235 protein MS0322 from Mannheimia succiniciproducens (strain KCTC 0769BP / MBEL55E).